The following is a 947-amino-acid chain: Plasma membrane ATPase 2 (947 aa).

The tract at residues Met-1–Val-103 is disordered. Over Met-1–Lys-144 the chain is Cytoplasmic. Positions Lys-7 to Asp-22 are enriched in basic and acidic residues. Residues Pro-26–Ala-61 are compositionally biased toward low complexity. Acidic residues predominate over residues Asp-62–Ile-74. A helical membrane pass occupies residues Phe-145–Ala-165. The Extracellular segment spans residues Gly-166–Asp-169. A helical membrane pass occupies residues Trp-170–Ile-189. Topologically, residues Gln-190 to Asn-320 are cytoplasmic. The helical transmembrane segment at Gly-321–Phe-342 threads the bilayer. Residues Tyr-343–Arg-353 lie on the Extracellular side of the membrane. The chain crosses the membrane as a helical span at residues Tyr-354 to Ala-376. Residues Val-377–Ile-748 are Cytoplasmic-facing. Asp-407 serves as the catalytic 4-aspartylphosphate intermediate. Mg(2+) contacts are provided by Asp-663 and Asp-667. A helical membrane pass occupies residues Asn-749–Tyr-767. Residues Asp-768 to Arg-783 are Extracellular-facing. The helical transmembrane segment at Leu-784–Leu-803 threads the bilayer. At Thr-804–Gln-853 the chain is on the cytoplasmic side. The helical transmembrane segment at Leu-854–Trp-874 threads the bilayer. The Extracellular segment spans residues Ser-875–Arg-886. Residues Val-887–Tyr-903 form a helical membrane-spanning segment. Over Ile-904 to Ser-947 the chain is Cytoplasmic.

Belongs to the cation transport ATPase (P-type) (TC 3.A.3) family. Type IIIA subfamily.

It localises to the cell membrane. It catalyses the reaction ATP + H2O + H(+)(in) = ADP + phosphate + 2 H(+)(out). Functionally, the plasma membrane ATPase of plants and fungi is a hydrogen ion pump. The proton gradient it generates drives the active transport of nutrients by H(+)-symport. The resulting external acidification and/or internal alkinization may mediate growth responses. The chain is Plasma membrane ATPase 2 (PMA2) from Saccharomyces cerevisiae (strain ATCC 204508 / S288c) (Baker's yeast).